A 233-amino-acid polypeptide reads, in one-letter code: MTIGIIGAMEEEVELLKNTMPSIEEVIIGGAKFYIGEIAGKEVVLLESGIGKVNAALGTTLLADRFKPEIIINTGSAGGIGEGLAIGDVIISDRLAYGDVDVTEFGYTYGQVPRMPAFYQGDAVLLKKAETIYRDYFADSENKAVYGLVITNDSFIMRPDQHEIIRTFFPDVKAVEMEAAAIAQVAYQFDIPFLIIRAISDLANQEATMSFDEFIHLAAKQSAICIIELLKTI.

Residue glutamate 12 is the Proton acceptor of the active site. Residues glycine 78, isoleucine 156, and 177–178 (ME) each bind substrate. The active-site Proton donor is the aspartate 201.

It belongs to the PNP/UDP phosphorylase family. MtnN subfamily.

It carries out the reaction S-adenosyl-L-homocysteine + H2O = S-(5-deoxy-D-ribos-5-yl)-L-homocysteine + adenine. The enzyme catalyses S-methyl-5'-thioadenosine + H2O = 5-(methylsulfanyl)-D-ribose + adenine. The catalysed reaction is 5'-deoxyadenosine + H2O = 5-deoxy-D-ribose + adenine. Its pathway is amino-acid biosynthesis; L-methionine biosynthesis via salvage pathway; S-methyl-5-thio-alpha-D-ribose 1-phosphate from S-methyl-5'-thioadenosine (hydrolase route): step 1/2. Functionally, catalyzes the irreversible cleavage of the glycosidic bond in both 5'-methylthioadenosine (MTA) and S-adenosylhomocysteine (SAH/AdoHcy) to adenine and the corresponding thioribose, 5'-methylthioribose and S-ribosylhomocysteine, respectively. Also cleaves 5'-deoxyadenosine, a toxic by-product of radical S-adenosylmethionine (SAM) enzymes, into 5-deoxyribose and adenine. This Listeria innocua serovar 6a (strain ATCC BAA-680 / CLIP 11262) protein is 5'-methylthioadenosine/S-adenosylhomocysteine nucleosidase.